The primary structure comprises 71 residues: Conotoxin Pl071 (71 aa).

The signal sequence occupies residues 1–20 (MSRLFMILLVICVITLGTDA). The propeptide occupies 21–31 (SQAEDSGTEKR). Tyrosine amide is present on Tyr-69.

The protein belongs to the conotoxin NSf-1 superfamily. As to expression, expressed by the venom duct.

It localises to the secreted. Probable neurotoxin with unknown target. Possibly targets ion channels. This Conus planorbis (Planorbis cone) protein is Conotoxin Pl071.